Reading from the N-terminus, the 531-residue chain is CTP synthase (531 aa).

The segment at 1 to 267 (MTKYIFVTGG…DQIVCEHLRL (267 aa)) is amidoligase domain. Residue Ser13 participates in CTP binding. Ser13 provides a ligand contact to UTP. ATP is bound at residue 14–19 (SLGKGI). Tyr54 contributes to the L-glutamine binding site. Asp71 is a binding site for ATP. Mg(2+)-binding residues include Asp71 and Glu141. CTP-binding positions include 148–150 (DIE), 188–193 (KTKPTQ), and Lys224. UTP is bound by residues 188 to 193 (KTKPTQ) and Lys224. 240–242 (RDA) contacts ATP. A Glutamine amidotransferase type-1 domain is found at 292-531 (KIALVGKYVE…REFVRASLKE (240 aa)). Gly354 is a binding site for L-glutamine. The Nucleophile; for glutamine hydrolysis role is filled by Cys381. L-glutamine is bound by residues 382 to 385 (LGMQ), Glu405, and Arg462. Active-site residues include His507 and Glu509.

This sequence belongs to the CTP synthase family. Homotetramer.

It catalyses the reaction UTP + L-glutamine + ATP + H2O = CTP + L-glutamate + ADP + phosphate + 2 H(+). It carries out the reaction L-glutamine + H2O = L-glutamate + NH4(+). The enzyme catalyses UTP + NH4(+) + ATP = CTP + ADP + phosphate + 2 H(+). It functions in the pathway pyrimidine metabolism; CTP biosynthesis via de novo pathway; CTP from UDP: step 2/2. Allosterically activated by GTP, when glutamine is the substrate; GTP has no effect on the reaction when ammonia is the substrate. The allosteric effector GTP functions by stabilizing the protein conformation that binds the tetrahedral intermediate(s) formed during glutamine hydrolysis. Inhibited by the product CTP, via allosteric rather than competitive inhibition. Functionally, catalyzes the ATP-dependent amination of UTP to CTP with either L-glutamine or ammonia as the source of nitrogen. Regulates intracellular CTP levels through interactions with the four ribonucleotide triphosphates. The chain is CTP synthase from Geobacillus kaustophilus (strain HTA426).